A 1024-amino-acid chain; its full sequence is Gamma-tubulin complex component 5 (1024 aa).

2 disordered regions span residues 155-203 (IGPY…LDPC) and 521-545 (TENEEKMSDNASASSGSDQGPSSRQ). A compositionally biased stretch (basic and acidic residues) spans 189-203 (TPLEEQDQNRKLDPC). A compositionally biased stretch (low complexity) spans 531 to 543 (ASASSGSDQGPSS).

The protein belongs to the TUBGCP family. Component of the gamma-tubulin ring complex (gTuRC) consisting of TUBGCP2, TUBGCP3, TUBGCP4, TUBGCP5 and TUBGCP6 and gamma-tubulin TUBG1 or TUBG2. TUBGCP2, TUBGCP3, TUBGCP4, TUBGCP5 and TUBGCP6 assemble in a 5:5:2:1:1 stoichiometry; each is associated with a gamma-tubulin, thereby arranging 14 gamma-tubulins in a helical manner. Gamma-tubulin at the first position is blocked by TUBGCP3 at the last position, allowing 13 protafilaments to grow into a microtubule. The gTuRC (via TUBGCP3 and TUBGCP6) interacts with ACTB and MZT1; the interactions form a luminal bridge that stabilizes the initial structure during complex assembly. The gTuRC (via TUBGCP2) interacts with MZT2A/MZT2B and CDK5RAP2 (via CM1 motif); the interactions play a role in gTuRC activation. Widely expressed, with highest levels in heart and skeletal muscle and moderate levels in brain.

It is found in the cytoplasm. It localises to the cytoskeleton. The protein localises to the microtubule organizing center. The protein resides in the centrosome. Its function is as follows. Component of the gamma-tubulin ring complex (gTuRC) which mediates microtubule nucleation. The gTuRC regulates the minus-end nucleation of alpha-beta tubulin heterodimers that grow into microtubule protafilaments, a critical step in centrosome duplication and spindle formation. The chain is Gamma-tubulin complex component 5 (TUBGCP5) from Homo sapiens (Human).